Consider the following 82-residue polypeptide: Small ribosomal subunit protein uS17 (82 aa).

This sequence belongs to the universal ribosomal protein uS17 family. Part of the 30S ribosomal subunit.

One of the primary rRNA binding proteins, it binds specifically to the 5'-end of 16S ribosomal RNA. The sequence is that of Small ribosomal subunit protein uS17 from Shewanella pealeana (strain ATCC 700345 / ANG-SQ1).